The sequence spans 62 residues: ATP synthase subunit K, mitochondrial (62 aa).

Residues 14–30 (HHLAIATIGTVVALVAP) traverse the membrane as a helical segment.

F-type ATP synthases have 2 components, the catalytic core F(1) and the membrane-embedded component F(0), linked together by a central stalk and a peripheral stalk. The central stalk, also called rotor shaft, is often seen as part of F(1). The peripheral stalk is seen as part of F(0). F(0) contains the membrane channel next to the rotor. F-type ATP synthases form dimers but each monomer functions independently in ATP generation. The dimer consists of 18 different polypeptides: ATP1 (subunit alpha, part of F(1), 3 molecules per monomer), ATP2 (subunit beta, part of F(1), 3 molecules per monomer), ATP3 (subunit gamma, part of the central stalk), ATP4 (subunit b, part of the peripheral stalk), ATP5/OSCP (subunit 5/OSCP, part of the peripheral stalk), ATP6 (subunit a, part of the peripheral stalk), ATP7 (subunit d, part of the peripheral stalk), ATP8 (subunit 8, part of the peripheral stalk), OLI1 (subunit c, part of the rotor, 10 molecules per monomer), ATP14 (subunit h, part of the peripheral stalk), ATP15 (subunit epsilon, part of the central stalk), ATP16 (subunit delta, part of the central stalk), ATP17 (subunit f, part of the peripheral stalk), ATP18 (subunit i/j, part of the peripheral stalk). Dimer-specific subunits are ATP19 (subunit k, at interface between monomers), ATP20 (subunit g, at interface between monomers), TIM11 (subunit e, at interface between monomers). Also contains subunit L.

It is found in the mitochondrion inner membrane. Mitochondrial membrane ATP synthase (F(1)F(0) ATP synthase or Complex V) produces ATP from ADP in the presence of a proton gradient across the membrane which is generated by electron transport complexes of the respiratory chain. F-type ATP synthases consist of two structural domains, F(1) - containing the extramembraneous catalytic core, and F(0) - containing the membrane proton channel, linked together by a central stalk and a peripheral stalk. During catalysis, ATP synthesis in the catalytic domain of F(1) is coupled via a rotary mechanism of the central stalk subunits to proton translocation. Part of the complex F(0) domain. Minor subunit located with subunit a/ATP6 in the membrane. The K chain binds the dimeric form by interacting with the G and E chains. The sequence is that of ATP synthase subunit K, mitochondrial from Pichia angusta (Yeast).